The primary structure comprises 184 residues: Photosystem I assembly protein Ycf4 (184 aa).

2 consecutive transmembrane segments (helical) span residues 19 to 39 and 57 to 77; these read ISNF…LLVG and IVFF…LFIS.

This sequence belongs to the Ycf4 family.

Its subcellular location is the plastid. The protein localises to the chloroplast thylakoid membrane. Functionally, seems to be required for the assembly of the photosystem I complex. In Nymphaea alba (White water-lily), this protein is Photosystem I assembly protein Ycf4.